The chain runs to 284 residues: tRNA-cytidine(32) 2-sulfurtransferase (284 aa).

Polar residues predominate over residues methionine 1 to alanine 11. Positions methionine 1–proline 20 are disordered. Residues serine 63–serine 68 carry the PP-loop motif motif. 3 residues coordinate [4Fe-4S] cluster: cysteine 138, cysteine 141, and cysteine 229.

Belongs to the TtcA family. In terms of assembly, homodimer. Mg(2+) serves as cofactor. The cofactor is [4Fe-4S] cluster.

The protein localises to the cytoplasm. It catalyses the reaction cytidine(32) in tRNA + S-sulfanyl-L-cysteinyl-[cysteine desulfurase] + AH2 + ATP = 2-thiocytidine(32) in tRNA + L-cysteinyl-[cysteine desulfurase] + A + AMP + diphosphate + H(+). The protein operates within tRNA modification. Functionally, catalyzes the ATP-dependent 2-thiolation of cytidine in position 32 of tRNA, to form 2-thiocytidine (s(2)C32). The sulfur atoms are provided by the cysteine/cysteine desulfurase (IscS) system. This chain is tRNA-cytidine(32) 2-sulfurtransferase, found in Chelativorans sp. (strain BNC1).